The chain runs to 180 residues: Insulin-like growth factor 2 (180 aa).

The N-terminal stretch at 1–24 (MGIPMGKSMLVLLTFLAFASCCIA) is a signal peptide. The interval 25–52 (AYRPSETLCGGELVDTLQFVCGDRGFYF) is b. 3 cysteine pairs are disulfide-bonded: cysteine 33–cysteine 71, cysteine 45–cysteine 84, and cysteine 70–cysteine 75. A c region spans residues 53–64 (SRPASRVSRRSR). Residues 65–85 (GIVEECCFRSCDLALLETYCA) form an a region. The interval 86–91 (TPAKSE) is d. Residues 92–180 (RDVSTPPTVL…APPEMASNRK (89 aa)) constitute a propeptide, e peptide. O-linked (GalNAc...) threonine glycosylation is found at threonine 96, threonine 99, and threonine 163. The disordered stretch occupies residues 161-180 (LPTQDPAHGGAPPEMASNRK).

This sequence belongs to the insulin family. Interacts with MYORG; this interaction is required for IGF2 secretion. Interacts with integrins ITGAV:ITGB3 and ITGA6:ITGB4; integrin-binding is required for IGF2 signaling. Interacts with IGFBP2. O-glycosylated with core 1 or possibly core 8 glycans. Thr-96 is a minor glycosylation site compared to Thr-99. Post-translationally, proteolytically processed by PCSK4, proIGF2 is cleaved at Arg-128 and Arg-92 to generate big-IGF2 and mature IGF2. In terms of tissue distribution, expressed in heart, placenta, lung, liver, muscle, kidney, tongue, limb, eye and pancreas.

Its subcellular location is the secreted. Its function is as follows. The insulin-like growth factors possess growth-promoting activity. Major fetal growth hormone in mammals. Plays a key role in regulating fetoplacental development. IGF2 is influenced by placental lactogen. Also involved in tissue differentiation. In adults, involved in glucose metabolism in adipose tissue, skeletal muscle and liver. Acts as a ligand for integrin which is required for IGF2 signaling. Positively regulates myogenic transcription factor MYOD1 function by facilitating the recruitment of transcriptional coactivators, thereby controlling muscle terminal differentiation. Inhibits myoblast differentiation and modulates metabolism via increasing the mitochondrial respiration rate. Preptin undergoes glucose-mediated co-secretion with insulin, and acts as a physiological amplifier of glucose-mediated insulin secretion. Exhibits osteogenic properties by increasing osteoblast mitogenic activity through phosphoactivation of MAPK1 and MAPK3. The polypeptide is Insulin-like growth factor 2 (Homo sapiens (Human)).